Here is a 502-residue protein sequence, read N- to C-terminus: Lysine--tRNA ligase (502 aa).

Glu-413 and Glu-420 together coordinate Mg(2+).

This sequence belongs to the class-II aminoacyl-tRNA synthetase family. Homodimer. It depends on Mg(2+) as a cofactor.

Its subcellular location is the cytoplasm. It carries out the reaction tRNA(Lys) + L-lysine + ATP = L-lysyl-tRNA(Lys) + AMP + diphosphate. The chain is Lysine--tRNA ligase from Aromatoleum aromaticum (strain DSM 19018 / LMG 30748 / EbN1) (Azoarcus sp. (strain EbN1)).